The sequence spans 204 residues: Urease accessory protein UreG (204 aa).

GTP is bound at residue 12 to 19 (GPVGSGKT).

The protein belongs to the SIMIBI class G3E GTPase family. UreG subfamily. As to quaternary structure, homodimer. UreD, UreF and UreG form a complex that acts as a GTP-hydrolysis-dependent molecular chaperone, activating the urease apoprotein by helping to assemble the nickel containing metallocenter of UreC. The UreE protein probably delivers the nickel.

It is found in the cytoplasm. Functionally, facilitates the functional incorporation of the urease nickel metallocenter. This process requires GTP hydrolysis, probably effectuated by UreG. In Ectopseudomonas mendocina (strain ymp) (Pseudomonas mendocina), this protein is Urease accessory protein UreG.